The chain runs to 738 residues: NAD(P)H-quinone oxidoreductase subunit 5, chloroplastic (738 aa).

Transmembrane regions (helical) follow at residues Trp-9 to Ile-29, Ile-39 to Ser-59, Val-89 to Ile-109, Phe-125 to Ile-145, Ile-147 to Thr-167, Gly-185 to Phe-205, Asn-219 to Ala-239, Thr-258 to Ala-278, Leu-280 to Ile-300, Leu-327 to Ile-347, Ala-354 to Ser-374, Thr-396 to Ser-416, Trp-425 to Tyr-445, Leu-542 to Phe-562, Ser-610 to Phe-630, Gly-691 to Ile-711, and Gly-717 to Ile-737.

It belongs to the complex I subunit 5 family. In terms of assembly, NDH is composed of at least 16 different subunits, 5 of which are encoded in the nucleus.

The protein resides in the plastid. Its subcellular location is the chloroplast thylakoid membrane. It carries out the reaction a plastoquinone + NADH + (n+1) H(+)(in) = a plastoquinol + NAD(+) + n H(+)(out). The catalysed reaction is a plastoquinone + NADPH + (n+1) H(+)(in) = a plastoquinol + NADP(+) + n H(+)(out). Its function is as follows. NDH shuttles electrons from NAD(P)H:plastoquinone, via FMN and iron-sulfur (Fe-S) centers, to quinones in the photosynthetic chain and possibly in a chloroplast respiratory chain. The immediate electron acceptor for the enzyme in this species is believed to be plastoquinone. Couples the redox reaction to proton translocation, and thus conserves the redox energy in a proton gradient. This Saccharum officinarum (Sugarcane) protein is NAD(P)H-quinone oxidoreductase subunit 5, chloroplastic (ndhF).